The primary structure comprises 326 residues: tRNA-modifying protein YgfZ (326 aa).

Positions 27 and 189 each coordinate folate.

It belongs to the tRNA-modifying YgfZ family.

It localises to the cytoplasm. Folate-binding protein involved in regulating the level of ATP-DnaA and in the modification of some tRNAs. It is probably a key factor in regulatory networks that act via tRNA modification, such as initiation of chromosomal replication. The polypeptide is tRNA-modifying protein YgfZ (Enterobacter sp. (strain 638)).